The sequence spans 206 residues: Protein Nef (206 aa).

A disordered region spans residues 1–46 (MGNKWSKCSTVGRPAIRERMRRAPAAEGVGPASQDSDKYGALTSSS). G2 carries the N-myristoyl glycine; by host lipid modification. S6 is modified (phosphoserine; by host). An acidic; interacts with host PACS1 and PACS2; stabilizes the interaction of NEF/MHC-I with host AP1M1; necessary for MHC-I internalization region spans residues 61-65 (QEEEE). The segment at 69–78 (PVRPQVPLRP) is SH3-binding; interaction with Src family tyrosine kinases. Positions 72–75 (PQVP) match the PxxP; stabilizes the interaction of NEF/MHC-I with host AP1M1; necessary for MHC-I internalization motif. The segment at 108-124 (DILDLWVYNTQGYFPDW) is mediates dimerization, Nef-PTE1 interaction. The segment at 148 to 180 (VDPREVEEANTGENNSLLHPMSLHGMEDSHREV) is binding to ATP6V1H. Positions 164 to 165 (LL) match the Dileucine internalization motif; necessary for CD4 internalization motif. The short motif at 174-175 (ED) is the Diacidic; necessary for CD4 internalization element.

This sequence belongs to the lentivirus primate group Nef protein family. As to quaternary structure, monomer; cytosolic form. Homodimer; membrane bound form. Interacts with Nef associated p21-activated kinase (PAK2); this interaction activates PAK2. Associates with the Nef-MHC-I-AP1 complex; this complex is required for MHC-I internalization. Interacts (via C-terminus) with host PI3-kinase. Interacts with host PACS1; this interaction seems to be weak. Interacts with host PACS2. Interacts with host LCK and MAPK3; these interactions inhibit the kinase activity of the latter. Interacts with host ATP6V1H; this interaction may play a role in CD4 endocytosis. Associates with the CD4-Nef-AP2 complex; this complex is required for CD4 internalization. Interacts with host AP2 subunit alpha and AP2 subunit sigma2. Interacts with TCR-zeta chain; this interaction up-regulates the Fas ligand (FasL) surface expression. Interacts with host HCK, LYN, and SRC; these interactions activate the Src family kinases. Interacts with MAP3K5; this interaction inhibits the Fas and TNFR-mediated death signals. Interacts with beta-COP and PTE1. Interacts with human RACK1; this increases Nef phosphorylation by PKC. Interacts with TP53; this interaction decreases the half-life of TP53, protecting the infected cell against p53-mediated apoptosis. In terms of processing, the virion-associated Nef proteins are cleaved by the viral protease to release the soluble C-terminal core protein. Nef is probably cleaved concomitantly with viral structural proteins on maturation of virus particles. Post-translationally, myristoylated. Phosphorylated on serine residues, probably by host PKCdelta and theta.

It localises to the host cell membrane. The protein resides in the virion. It is found in the secreted. The protein localises to the host Golgi apparatus membrane. In terms of biological role, factor of infectivity and pathogenicity, required for optimal virus replication. Alters numerous pathways of T-lymphocyte function and down-regulates immunity surface molecules in order to evade host defense and increase viral infectivity. Alters the functionality of other immunity cells, like dendritic cells, monocytes/macrophages and NK cells. In infected CD4(+) T-lymphocytes, down-regulates the surface MHC-I, mature MHC-II, CD4, CD28, CCR5 and CXCR4 molecules. Mediates internalization and degradation of host CD4 through the interaction of with the cytoplasmic tail of CD4, the recruitment of AP-2 (clathrin adapter protein complex 2), internalization through clathrin coated pits, and subsequent transport to endosomes and lysosomes for degradation. Diverts host MHC-I molecules to the trans-Golgi network-associated endosomal compartments by an endocytic pathway to finally target them for degradation. MHC-I down-regulation may involve AP-1 (clathrin adapter protein complex 1) or possibly Src family kinase-ZAP70/Syk-PI3K cascade recruited by PACS2. In consequence infected cells are masked for immune recognition by cytotoxic T-lymphocytes. Decreasing the number of immune receptors also prevents reinfection by more HIV particles (superinfection). Down-regulates host SERINC3 and SERINC5 thereby excluding these proteins from the viral particles. Virion infectivity is drastically higher when SERINC3 or SERINC5 are excluded from the viral envelope, because these host antiviral proteins impair the membrane fusion event necessary for subsequent virion penetration. Its function is as follows. Bypasses host T-cell signaling by inducing a transcriptional program nearly identical to that of anti-CD3 cell activation. Interaction with TCR-zeta chain up-regulates the Fas ligand (FasL). Increasing surface FasL molecules and decreasing surface MHC-I molecules on infected CD4(+) cells send attacking cytotoxic CD8+ T-lymphocytes into apoptosis. Functionally, plays a role in optimizing the host cell environment for viral replication without causing cell death by apoptosis. Protects the infected cells from apoptosis in order to keep them alive until the next virus generation is ready to strike. Inhibits the Fas and TNFR-mediated death signals by blocking MAP3K5/ASK1. Decreases the half-life of TP53, protecting the infected cell against p53-mediated apoptosis. Inhibits the apoptotic signals regulated by the Bcl-2 family proteins through the formation of a Nef/PI3-kinase/PAK2 complex that leads to activation of PAK2 and induces phosphorylation of host BAD. In terms of biological role, extracellular Nef protein targets CD4(+) T-lymphocytes for apoptosis by interacting with CXCR4 surface receptors. In Human immunodeficiency virus type 1 group M subtype C (isolate 92BR025) (HIV-1), this protein is Protein Nef.